The chain runs to 181 residues: ADP-ribosylation factor 2-A (181 aa).

A lipid anchor (N-myristoyl glycine) is attached at Gly2. Residues 24–31 (GLDAAGKT), 67–71 (DVGGQ), and 126–129 (NKQD) contribute to the GTP site.

This sequence belongs to the small GTPase superfamily. Arf family.

The protein resides in the golgi apparatus. Its activity is regulated as follows. Activated by AGD10. In terms of biological role, GTP-binding protein involved in protein trafficking; may modulate vesicle budding and uncoating within the Golgi apparatus. The polypeptide is ADP-ribosylation factor 2-A (ARF2-A) (Arabidopsis thaliana (Mouse-ear cress)).